Consider the following 253-residue polypeptide: Proteasome subunit alpha (253 aa).

Low complexity predominate over residues 232 to 242 (AAGASTAGEAG). A disordered region spans residues 232–253 (AAGASTAGEAGSAEDEGSDDEK). Positions 243 to 253 (SAEDEGSDDEK) are enriched in acidic residues.

This sequence belongs to the peptidase T1A family. In terms of assembly, the 20S proteasome core is composed of 14 alpha and 14 beta subunits that assemble into four stacked heptameric rings, resulting in a barrel-shaped structure. The two inner rings, each composed of seven catalytic beta subunits, are sandwiched by two outer rings, each composed of seven alpha subunits. The catalytic chamber with the active sites is on the inside of the barrel. Has a gated structure, the ends of the cylinder being occluded by the N-termini of the alpha-subunits. Is capped by the proteasome-associated ATPase, ARC.

It is found in the cytoplasm. Its pathway is protein degradation; proteasomal Pup-dependent pathway. Its activity is regulated as follows. The formation of the proteasomal ATPase ARC-20S proteasome complex, likely via the docking of the C-termini of ARC into the intersubunit pockets in the alpha-rings, may trigger opening of the gate for substrate entry. Interconversion between the open-gate and close-gate conformations leads to a dynamic regulation of the 20S proteasome proteolysis activity. Functionally, component of the proteasome core, a large protease complex with broad specificity involved in protein degradation. This is Proteasome subunit alpha from Streptomyces avermitilis (strain ATCC 31267 / DSM 46492 / JCM 5070 / NBRC 14893 / NCIMB 12804 / NRRL 8165 / MA-4680).